Consider the following 463-residue polypeptide: Cysteine--tRNA ligase (463 aa).

C29 contacts Zn(2+). The short motif at P31–N41 is the 'HIGH' region element. Zn(2+) contacts are provided by C211, H236, and E240. A 'KMSKS' region motif is present at residues K269–S273. Residue K272 coordinates ATP.

Belongs to the class-I aminoacyl-tRNA synthetase family. As to quaternary structure, monomer. Zn(2+) is required as a cofactor.

It is found in the cytoplasm. It catalyses the reaction tRNA(Cys) + L-cysteine + ATP = L-cysteinyl-tRNA(Cys) + AMP + diphosphate. This is Cysteine--tRNA ligase from Caulobacter vibrioides (strain ATCC 19089 / CIP 103742 / CB 15) (Caulobacter crescentus).